The sequence spans 90 residues: MKRVLIKLTGKVQGVGCRRTTLAKARVLGVTGYVTNCVDGSVEVLAQGSHVAVDNLIAWCQAGVPCTVGLRVDVEEYQGDDIYLDFSIVR.

Positions 3-90 (RVLIKLTGKV…DIYLDFSIVR (88 aa)) constitute an Acylphosphatase-like domain. Residues Arg-18 and Asn-36 contribute to the active site.

Belongs to the acylphosphatase family.

It carries out the reaction an acyl phosphate + H2O = a carboxylate + phosphate + H(+). The protein is Acylphosphatase (acyP) of Shewanella oneidensis (strain ATCC 700550 / JCM 31522 / CIP 106686 / LMG 19005 / NCIMB 14063 / MR-1).